The chain runs to 158 residues: NAD(P)H-quinone oxidoreductase subunit J, chloroplastic (158 aa).

Belongs to the complex I 30 kDa subunit family. In terms of assembly, NDH is composed of at least 16 different subunits, 5 of which are encoded in the nucleus.

It is found in the plastid. Its subcellular location is the chloroplast thylakoid membrane. It carries out the reaction a plastoquinone + NADH + (n+1) H(+)(in) = a plastoquinol + NAD(+) + n H(+)(out). The enzyme catalyses a plastoquinone + NADPH + (n+1) H(+)(in) = a plastoquinol + NADP(+) + n H(+)(out). Functionally, NDH shuttles electrons from NAD(P)H:plastoquinone, via FMN and iron-sulfur (Fe-S) centers, to quinones in the photosynthetic chain and possibly in a chloroplast respiratory chain. The immediate electron acceptor for the enzyme in this species is believed to be plastoquinone. Couples the redox reaction to proton translocation, and thus conserves the redox energy in a proton gradient. This chain is NAD(P)H-quinone oxidoreductase subunit J, chloroplastic, found in Helianthus annuus (Common sunflower).